The following is a 175-amino-acid chain: NAD(P)H-quinone oxidoreductase subunit I, chloroplastic (175 aa).

4Fe-4S ferredoxin-type domains lie at 55 to 84 (GRIHFEFDKCIACEVCVRVCPINLPVVNWE) and 95 to 124 (QTYSIDFGVCIFCGNCVEYCPTNCLSMTEE). The [4Fe-4S] cluster site is built by C64, C67, C70, C74, C104, C107, C110, and C114.

The protein belongs to the complex I 23 kDa subunit family. As to quaternary structure, NDH is composed of at least 16 different subunits, 5 of which are encoded in the nucleus. It depends on [4Fe-4S] cluster as a cofactor.

The protein resides in the plastid. The protein localises to the chloroplast thylakoid membrane. The catalysed reaction is a plastoquinone + NADH + (n+1) H(+)(in) = a plastoquinol + NAD(+) + n H(+)(out). The enzyme catalyses a plastoquinone + NADPH + (n+1) H(+)(in) = a plastoquinol + NADP(+) + n H(+)(out). Its function is as follows. NDH shuttles electrons from NAD(P)H:plastoquinone, via FMN and iron-sulfur (Fe-S) centers, to quinones in the photosynthetic chain and possibly in a chloroplast respiratory chain. The immediate electron acceptor for the enzyme in this species is believed to be plastoquinone. Couples the redox reaction to proton translocation, and thus conserves the redox energy in a proton gradient. In Chlorokybus atmophyticus (Soil alga), this protein is NAD(P)H-quinone oxidoreductase subunit I, chloroplastic.